We begin with the raw amino-acid sequence, 340 residues long: Guanine nucleotide-binding protein G(I)/G(S)/G(T) subunit beta-3 (340 aa).

WD repeat units follow at residues 53–83 (GHLA…IVWD), 95–125 (LRSS…SIYN), 141–170 (AHTG…ALWD), 182–212 (GHTG…KLWD), 224–254 (GHES…RLFD), 268–298 (SIIC…NVWD), and 310–340 (GHDN…KIWN).

The protein belongs to the WD repeat G protein beta family. As to quaternary structure, g proteins are composed of 3 units, alpha, beta and gamma. Interacts with RASD2.

Functionally, guanine nucleotide-binding proteins (G proteins) are involved as a modulator or transducer in various transmembrane signaling systems. The beta and gamma chains are required for the GTPase activity, for replacement of GDP by GTP, and for G protein-effector interaction. The protein is Guanine nucleotide-binding protein G(I)/G(S)/G(T) subunit beta-3 (Gnb3) of Mus musculus (Mouse).